A 59-amino-acid chain; its full sequence is Large ribosomal subunit protein uL30 (59 aa).

It belongs to the universal ribosomal protein uL30 family. In terms of assembly, part of the 50S ribosomal subunit.

The sequence is that of Large ribosomal subunit protein uL30 from Erwinia tasmaniensis (strain DSM 17950 / CFBP 7177 / CIP 109463 / NCPPB 4357 / Et1/99).